A 34-amino-acid chain; its full sequence is Photosystem II reaction center protein M (34 aa).

Residues 7-27 (GFVATLLFVLVPAIFLIILYI) form a helical membrane-spanning segment.

This sequence belongs to the PsbM family. As to quaternary structure, PSII is composed of 1 copy each of membrane proteins PsbA, PsbB, PsbC, PsbD, PsbE, PsbF, PsbH, PsbI, PsbJ, PsbK, PsbL, PsbM, PsbT, PsbX, PsbY, PsbZ, Psb30/Ycf12, peripheral proteins PsbO, CyanoQ (PsbQ), PsbU, PsbV and a large number of cofactors. It forms dimeric complexes.

The protein localises to the cellular thylakoid membrane. One of the components of the core complex of photosystem II (PSII). PSII is a light-driven water:plastoquinone oxidoreductase that uses light energy to abstract electrons from H(2)O, generating O(2) and a proton gradient subsequently used for ATP formation. It consists of a core antenna complex that captures photons, and an electron transfer chain that converts photonic excitation into a charge separation. This subunit is found at the monomer-monomer interface. This Synechococcus sp. (strain RCC307) protein is Photosystem II reaction center protein M.